The following is a 539-amino-acid chain: Nucleoporin NUP60 (539 aa).

Phosphoserine occurs at positions 10, 49, 81, and 89. A disordered region spans residues 44–80 (DSARVSPRNNVANKQPRNESFNRRISSMPGGYFHSEI). A coiled-coil region spans residues 91 to 118 (VVSAVGEARNDIENKEEEYDETHETNIS). Phosphoserine is present on residues Ser162, Ser171, Ser214, and Ser222. Polar residues-rich tracts occupy residues 242 to 252 (TANTSAQSIAS) and 258 to 267 (SGVSKSAPSK). Disordered regions lie at residues 242–267 (TANT…APSK), 305–329 (IRKH…TTVK), and 347–493 (NATK…GKHI). Positions 347-359 (NATKISPSAPSKD) are enriched in polar residues. Ser352, Ser360, Ser374, and Ser382 each carry phosphoserine. Polar residues-rich tracts occupy residues 395–433 (SAFN…TNLQ) and 448–485 (GDST…LSQE). FXF repeat units lie at residues 399-401 (FSF) and 427-429 (FNF). At Thr460 the chain carries Phosphothreonine. The FXF 3 repeat unit spans residues 469–471 (FVF). Phosphoserine is present on residues Ser480 and Ser483. One copy of the FXF 4 repeat lies at 509–511 (FDF).

As to quaternary structure, component of the nuclear pore complex (NPC). NPC constitutes the exclusive means of nucleocytoplasmic transport. NPCs allow the passive diffusion of ions and small molecules and the active, nuclear transport receptor-mediated bidirectional transport of macromolecules such as proteins, RNAs, ribonucleoparticles (RNPs), and ribosomal subunits across the nuclear envelope. Due to its 8-fold rotational symmetry, all subunits are present with 8 copies or multiples thereof. Binds to NUP1 and NUP2 forming the nuclear basket and the distal ring. The interaction with NUP2 is GSP1-GTP-dependent. Interacts through its FG repeats with karyopherins, such as KAP123 and KAP95-SRP1 (KAP60). Also interacts with GSP1-GTP and SRM1 (PRP20), where NUP60 reduces SRM1 activity, thus inhibiting GSP1 guanine nucleotide dissociation. In terms of processing, phosphorylated by CDC28.

The protein localises to the nucleus. It is found in the nuclear pore complex. The protein resides in the nucleus membrane. In terms of biological role, functions as a component of the nuclear pore complex (NPC). NPC components, collectively referred to as nucleoporins (NUPs), can play the role of both NPC structural components and of docking or interaction partners for transiently associated nuclear transport factors. Active directional transport is assured by both, a Phe-Gly (FG) repeat affinity gradient for these transport factors across the NPC and a transport cofactor concentration gradient across the nuclear envelope (GSP1 and GSP2 GTPases associated predominantly with GTP in the nucleus, with GDP in the cytoplasm). This chain is Nucleoporin NUP60 (NUP60), found in Saccharomyces cerevisiae (strain ATCC 204508 / S288c) (Baker's yeast).